Consider the following 284-residue polypeptide: D-tagatose-1,6-bisphosphate aldolase subunit GatY (284 aa).

The active-site Proton donor is the Asp-82. Residues His-83 and His-180 each contribute to the Zn(2+) site. Gly-181 is a dihydroxyacetone phosphate binding site. His-208 contributes to the Zn(2+) binding site. Dihydroxyacetone phosphate contacts are provided by residues 209–211 and 230–233; these read GAS and NVAT.

Belongs to the class II fructose-bisphosphate aldolase family. TagBP aldolase GatY subfamily. Forms a complex with GatZ. The cofactor is Zn(2+).

The catalysed reaction is D-tagatofuranose 1,6-bisphosphate = D-glyceraldehyde 3-phosphate + dihydroxyacetone phosphate. The protein operates within carbohydrate metabolism; D-tagatose 6-phosphate degradation; D-glyceraldehyde 3-phosphate and glycerone phosphate from D-tagatose 6-phosphate: step 2/2. Catalytic subunit of the tagatose-1,6-bisphosphate aldolase GatYZ, which catalyzes the reversible aldol condensation of dihydroxyacetone phosphate (DHAP or glycerone-phosphate) with glyceraldehyde 3-phosphate (G3P) to produce tagatose 1,6-bisphosphate (TBP). Requires GatZ subunit for full activity and stability. Is involved in the catabolism of galactitol and D-tagatose. In Klebsiella oxytoca, this protein is D-tagatose-1,6-bisphosphate aldolase subunit GatY (gatY).